The primary structure comprises 340 residues: N-acetyl-gamma-glutamyl-phosphate reductase (340 aa).

Residue C146 is part of the active site.

Belongs to the NAGSA dehydrogenase family. Type 1 subfamily.

The protein resides in the cytoplasm. It catalyses the reaction N-acetyl-L-glutamate 5-semialdehyde + phosphate + NADP(+) = N-acetyl-L-glutamyl 5-phosphate + NADPH + H(+). The protein operates within amino-acid biosynthesis; L-arginine biosynthesis; N(2)-acetyl-L-ornithine from L-glutamate: step 3/4. In terms of biological role, catalyzes the NADPH-dependent reduction of N-acetyl-5-glutamyl phosphate to yield N-acetyl-L-glutamate 5-semialdehyde. This is N-acetyl-gamma-glutamyl-phosphate reductase from Streptococcus sanguinis (strain SK36).